The chain runs to 440 residues: D-serine dehydratase (440 aa).

Position 116 is an N6-(pyridoxal phosphate)lysine (Lys116).

It belongs to the serine/threonine dehydratase family. DsdA subfamily. In terms of assembly, monomer. Requires pyridoxal 5'-phosphate as cofactor.

It carries out the reaction D-serine = pyruvate + NH4(+). The chain is D-serine dehydratase from Salmonella choleraesuis (strain SC-B67).